The primary structure comprises 422 residues: MPEVKVPELAESITEGTIAEWLKNVGDSVEKGEAILELETDKVNVEVVSEEAGVLSEQLASEGDTVEVGQAIAIIGEGSGNASKENSNDNTPQQNEETNNKKEETTNNSVDKAEVNQANDDNQQRINATPSARRYARENGVNLAEVSPKTNDVVRKEDIDKKQQAPASTQTTQQASAKEEKKYNQYPTKPVIREKMSRRKKTAAKKLLEVSNNTAMLTTFNEVDMTNVMELRKRKKEQFMKDHDGTKLGFMSFFTKASVAALKKYPEVNAEIDGDDMITKQYYDIGVAVSTDDGLLVPFVRDCDKKNFAEIEAEIANLAVKAREKKLGLDDMVNGSFTITNGGIFGSMMSTPIINGNQAAILGMHSIITRPIAIDQDTIENRPMMYIALSYDHRIIDGKEAVGFLKTIKELIENPEDLLLES.

The 76-residue stretch at 1–76 (MPEVKVPELA…EVGQAIAIIG (76 aa)) folds into the Lipoyl-binding domain. Lysine 42 is subject to N6-lipoyllysine. Residues 77 to 185 (EGSGNASKEN…SAKEEKKYNQ (109 aa)) form a disordered region. Composition is skewed to polar residues over residues 80–94 (GNASKENSNDNTPQQ) and 116–130 (NQANDDNQQRINATP). In terms of domain architecture, Peripheral subunit-binding (PSBD) spans 127 to 163 (NATPSARRYARENGVNLAEVSPKTNDVVRKEDIDKKQ). Positions 152–163 (DVVRKEDIDKKQ) are enriched in basic and acidic residues. Residues 164–176 (QAPASTQTTQQAS) are compositionally biased toward low complexity. Active-site residues include histidine 393 and aspartate 397.

It belongs to the 2-oxoacid dehydrogenase family. Forms a 24-polypeptide structural core with octahedral symmetry. Part of the 2-oxoglutarate dehydrogenase (OGDH) complex composed of E1 (2-oxoglutarate dehydrogenase), E2 (dihydrolipoamide succinyltransferase) and E3 (dihydrolipoamide dehydrogenase); the complex contains multiple copies of the three enzymatic components (E1, E2 and E3). (R)-lipoate is required as a cofactor.

The enzyme catalyses N(6)-[(R)-dihydrolipoyl]-L-lysyl-[protein] + succinyl-CoA = N(6)-[(R)-S(8)-succinyldihydrolipoyl]-L-lysyl-[protein] + CoA. Its pathway is amino-acid degradation; L-lysine degradation via saccharopine pathway; glutaryl-CoA from L-lysine: step 6/6. Its function is as follows. E2 component of the 2-oxoglutarate dehydrogenase (OGDH) complex which catalyzes the second step in the conversion of 2-oxoglutarate to succinyl-CoA and CO(2). The protein is Dihydrolipoyllysine-residue succinyltransferase component of 2-oxoglutarate dehydrogenase complex (odhB) of Staphylococcus aureus (strain USA300).